Here is a 200-residue protein sequence, read N- to C-terminus: NADH-quinone oxidoreductase subunit C (200 aa).

Belongs to the complex I 30 kDa subunit family. As to quaternary structure, NDH-1 is composed of 14 different subunits. Subunits NuoB, C, D, E, F, and G constitute the peripheral sector of the complex.

The protein resides in the cell inner membrane. It catalyses the reaction a quinone + NADH + 5 H(+)(in) = a quinol + NAD(+) + 4 H(+)(out). Functionally, NDH-1 shuttles electrons from NADH, via FMN and iron-sulfur (Fe-S) centers, to quinones in the respiratory chain. The immediate electron acceptor for the enzyme in this species is believed to be ubiquinone. Couples the redox reaction to proton translocation (for every two electrons transferred, four hydrogen ions are translocated across the cytoplasmic membrane), and thus conserves the redox energy in a proton gradient. In Burkholderia cenocepacia (strain HI2424), this protein is NADH-quinone oxidoreductase subunit C.